A 192-amino-acid chain; its full sequence is dCTP deaminase, dUMP-forming (192 aa).

Residues 101–106, Asp-119, 127–129, Gln-148, Tyr-162, and Gln-174 contribute to the dCTP site; these read KSSLGR and TLE. Glu-129 functions as the Proton donor/acceptor in the catalytic mechanism. Residues 165 to 184 are disordered; it reads GAYGNRYQGQRGPTASRSHL. Residues 171-183 show a composition bias toward polar residues; it reads YQGQRGPTASRSH.

Belongs to the dCTP deaminase family. Homotrimer.

It catalyses the reaction dCTP + 2 H2O = dUMP + NH4(+) + diphosphate. It participates in pyrimidine metabolism; dUMP biosynthesis; dUMP from dCTP: step 1/1. Functionally, bifunctional enzyme that catalyzes both the deamination of dCTP to dUTP and the hydrolysis of dUTP to dUMP without releasing the toxic dUTP intermediate. The sequence is that of dCTP deaminase, dUMP-forming from Kocuria rhizophila (strain ATCC 9341 / DSM 348 / NBRC 103217 / DC2201).